The following is a 1648-amino-acid chain: Vitellogenin-6 (1648 aa).

An N-terminal signal peptide occupies residues 1-15; sequence MRFAVLLALFGLALA. The 666-residue stretch at 26-691 folds into the Vitellogenin domain; it reads YRSGREYRYQ…SNDSVLPKEI (666 aa). Intrachain disulfides connect Cys178/Cys203 and Cys219/Cys222. 3 N-linked (GlcNAc...) asparagine glycosylation sites follow: Asn237, Asn371, and Asn683. A disordered region spans residues 1070–1092; it reads EKNVEYEQEDKEPKSSQLQSQIR. The N-linked (GlcNAc...) asparagine glycan is linked to Asn1295. A VWFD domain is found at 1346 to 1514; it reads PECIVKSKEI…SYLSKDDECE (169 aa). 2 disulfide bridges follow: Cys1348/Cys1477 and Cys1370/Cys1513. 2 N-linked (GlcNAc...) asparagine glycosylation sites follow: Asn1584 and Asn1617.

The precursor protein is probably further processed into vitellin polypeptides VT2 and VT3. In terms of processing, both VT2 and VT3 polypeptides seem to be N-glycosylated.

Its subcellular location is the secreted. Functionally, precursor of the egg-yolk proteins that are sources of nutrients during embryonic development. This is Vitellogenin-6 (vit-6) from Oscheius tipulae.